The chain runs to 156 residues: Ribosomal RNA large subunit methyltransferase H (156 aa).

Residues leucine 74, glycine 105, and 124–129 (LSKLTL) each bind S-adenosyl-L-methionine.

Belongs to the RNA methyltransferase RlmH family. As to quaternary structure, homodimer.

The protein resides in the cytoplasm. The catalysed reaction is pseudouridine(1915) in 23S rRNA + S-adenosyl-L-methionine = N(3)-methylpseudouridine(1915) in 23S rRNA + S-adenosyl-L-homocysteine + H(+). Functionally, specifically methylates the pseudouridine at position 1915 (m3Psi1915) in 23S rRNA. The protein is Ribosomal RNA large subunit methyltransferase H of Legionella pneumophila (strain Lens).